We begin with the raw amino-acid sequence, 460 residues long: Ufm1-specific protease 2 (460 aa).

Residues cysteine 293, aspartate 417, and histidine 419 contribute to the active site.

Belongs to the peptidase C78 family.

The protein localises to the endoplasmic reticulum. It localises to the cytoplasm. The protein resides in the nucleus. Thiol-dependent isopeptidase that specifically cleaves UFM1, a ubiquitin-like modifier protein, from conjugated proteins. While it is also able to mediate the processing of UFM1 precursors, a prerequisite for conjugation reactions, UFSP2 mainly acts as a protein deUFMylase that mediates deconjugation of UFM1 from target proteins. In Gallus gallus (Chicken), this protein is Ufm1-specific protease 2.